Consider the following 688-residue polypeptide: Glycine--tRNA ligase beta subunit (688 aa).

It belongs to the class-II aminoacyl-tRNA synthetase family. As to quaternary structure, tetramer of two alpha and two beta subunits.

The protein localises to the cytoplasm. The catalysed reaction is tRNA(Gly) + glycine + ATP = glycyl-tRNA(Gly) + AMP + diphosphate. The protein is Glycine--tRNA ligase beta subunit of Desulforudis audaxviator (strain MP104C).